The sequence spans 206 residues: Orotate phosphoribosyltransferase (206 aa).

5-phospho-alpha-D-ribose 1-diphosphate is bound by residues Arg97, Lys98, Lys101, and 125-133 (NDVIASGRS). Arg157 contacts orotate.

It belongs to the purine/pyrimidine phosphoribosyltransferase family. PyrE subfamily. As to quaternary structure, homodimer. Mg(2+) is required as a cofactor.

The enzyme catalyses orotidine 5'-phosphate + diphosphate = orotate + 5-phospho-alpha-D-ribose 1-diphosphate. Its pathway is pyrimidine metabolism; UMP biosynthesis via de novo pathway; UMP from orotate: step 1/2. In terms of biological role, catalyzes the transfer of a ribosyl phosphate group from 5-phosphoribose 1-diphosphate to orotate, leading to the formation of orotidine monophosphate (OMP). The sequence is that of Orotate phosphoribosyltransferase from Chlamydia caviae (strain ATCC VR-813 / DSM 19441 / 03DC25 / GPIC) (Chlamydophila caviae).